We begin with the raw amino-acid sequence, 331 residues long: Biotin synthase (331 aa).

Residues 52-277 (PDVEVEGIIS…RTMLRFAGGR (226 aa)) form the Radical SAM core domain. [4Fe-4S] cluster is bound by residues cysteine 67, cysteine 71, and cysteine 74. Residues cysteine 110, cysteine 143, cysteine 202, and arginine 272 each coordinate [2Fe-2S] cluster.

Belongs to the radical SAM superfamily. Biotin synthase family. As to quaternary structure, homodimer. It depends on [4Fe-4S] cluster as a cofactor. The cofactor is [2Fe-2S] cluster.

The enzyme catalyses (4R,5S)-dethiobiotin + (sulfur carrier)-SH + 2 reduced [2Fe-2S]-[ferredoxin] + 2 S-adenosyl-L-methionine = (sulfur carrier)-H + biotin + 2 5'-deoxyadenosine + 2 L-methionine + 2 oxidized [2Fe-2S]-[ferredoxin]. The protein operates within cofactor biosynthesis; biotin biosynthesis; biotin from 7,8-diaminononanoate: step 2/2. Its function is as follows. Catalyzes the conversion of dethiobiotin (DTB) to biotin by the insertion of a sulfur atom into dethiobiotin via a radical-based mechanism. This is Biotin synthase from Mycolicibacterium gilvum (strain PYR-GCK) (Mycobacterium gilvum (strain PYR-GCK)).